Reading from the N-terminus, the 303-residue chain is MPQNKVLSFPLPEGTLLEDITKNKWILGKQLGSGGFGLVYQVSCKSKEIDCVAKIELKESGGLFCEINFYNRVMKNKTSLDTWMKEQKIDYIGIPSFHGFGITIYKNVEYRFAIIQRLGRDLENILSEKEKFNITVIKKLAIKILDILKFIHSKEFSHGDIKAGNILFGKDDDKVYLVDYGLATKYSSNGKHKEYTINPKNRHNGTMAFTSIDAHKGVTVSRRGDLESLGFCMLKWYSGKLPWEKYEKEPENVQGMKEAFVNNISKKTIPFKNAGIIYNYIKVVTKLEYEEAPNYESLKQMFL.

In terms of domain architecture, Protein kinase spans 25–303 (WILGKQLGSG…NYESLKQMFL (279 aa)). ATP contacts are provided by residues 31-39 (LGSGGFGLV) and K54. D160 functions as the Proton acceptor in the catalytic mechanism.

The protein belongs to the protein kinase superfamily. Ser/Thr protein kinase family. Poxviruses subfamily.

The catalysed reaction is L-seryl-[protein] + ATP = O-phospho-L-seryl-[protein] + ADP + H(+). It carries out the reaction L-threonyl-[protein] + ATP = O-phospho-L-threonyl-[protein] + ADP + H(+). The sequence is that of Probable serine/threonine-protein kinase FPV212 from Vertebrata (FPV).